A 193-amino-acid polypeptide reads, in one-letter code: ATP-dependent Clp protease proteolytic subunit 2 (193 aa).

Ser98 (nucleophile) is an active-site residue. Residue His123 is part of the active site.

The protein belongs to the peptidase S14 family. As to quaternary structure, fourteen ClpP subunits assemble into 2 heptameric rings which stack back to back to give a disk-like structure with a central cavity, resembling the structure of eukaryotic proteasomes.

It is found in the cytoplasm. It carries out the reaction Hydrolysis of proteins to small peptides in the presence of ATP and magnesium. alpha-casein is the usual test substrate. In the absence of ATP, only oligopeptides shorter than five residues are hydrolyzed (such as succinyl-Leu-Tyr-|-NHMec, and Leu-Tyr-Leu-|-Tyr-Trp, in which cleavage of the -Tyr-|-Leu- and -Tyr-|-Trp bonds also occurs).. In terms of biological role, cleaves peptides in various proteins in a process that requires ATP hydrolysis. Has a chymotrypsin-like activity. Plays a major role in the degradation of misfolded proteins. The polypeptide is ATP-dependent Clp protease proteolytic subunit 2 (Bacillus cereus (strain ATCC 10987 / NRS 248)).